Reading from the N-terminus, the 187-residue chain is ATP-dependent protease subunit HslV (187 aa).

Thr13 is an active-site residue. Na(+)-binding residues include Ala172, Cys175, and Thr178.

The protein belongs to the peptidase T1B family. HslV subfamily. As to quaternary structure, a double ring-shaped homohexamer of HslV is capped on each side by a ring-shaped HslU homohexamer. The assembly of the HslU/HslV complex is dependent on binding of ATP.

Its subcellular location is the cytoplasm. It catalyses the reaction ATP-dependent cleavage of peptide bonds with broad specificity.. With respect to regulation, allosterically activated by HslU binding. Functionally, protease subunit of a proteasome-like degradation complex believed to be a general protein degrading machinery. The chain is ATP-dependent protease subunit HslV from Caulobacter sp. (strain K31).